The chain runs to 270 residues: Phosphatidylinositol transfer protein alpha isoform (270 aa).

Positions 58, 60, 85, 89, 96, and 194 each coordinate a 1,2-diacyl-sn-glycero-3-phospho-(1D-myo-inositol). Lys-215 carries the post-translational modification N6-acetyllysine.

This sequence belongs to the PtdIns transfer protein family. PI transfer class I subfamily. Post-translationally, phosphorylated by PKC in a calcium and phosphatidylserine-dependent manner.

Its subcellular location is the cytoplasm. It is found in the nucleus. It carries out the reaction a 1,2-diacyl-sn-glycero-3-phosphocholine(in) = a 1,2-diacyl-sn-glycero-3-phosphocholine(out). It catalyses the reaction a 1,2-diacyl-sn-glycero-3-phospho-(1D-myo-inositol)(in) = a 1,2-diacyl-sn-glycero-3-phospho-(1D-myo-inositol)(out). In terms of biological role, catalyzes the transfer of phosphatidylinositol (PI) and phosphatidylcholine (PC) between membranes. Shows a preference for PI and PC containing shorter saturated or monosaturated acyl chains at the sn-1 and sn-2 positions. Preference order for PC is C16:1 &gt; C16:0 &gt; C18:1 &gt; C18:0 &gt; C20:4 and for PI is C16:1 &gt; C16:0 &gt; C18:1 &gt; C18:0 &gt; C20:4 &gt; C20:3. This Bos taurus (Bovine) protein is Phosphatidylinositol transfer protein alpha isoform (PITPNA).